The chain runs to 248 residues: ATP synthase subunit a (248 aa).

The next 7 helical transmembrane spans lie at 29-49 (AMLTTCVSLSFFLFLFYCLFS), 85-105 (VFPFLFVIFSFILISNVQGLV), 115-135 (LIQTMVLALTVFIGVIIIVLA), 143-163 (LFLPGGTSIVLAFLLVPIEIV), 176-196 (LFANMMAGHTLLKVIAAVAWA), 201-221 (GGLLLIAHIVPLGVLVILFGL), and 227-247 (LIQAYVFTILSCIYINDAIVL).

The protein belongs to the ATPase A chain family. In terms of assembly, F-type ATPases have 2 components, CF(1) - the catalytic core - and CF(0) - the membrane proton channel. CF(1) has five subunits: alpha(3), beta(3), gamma(1), delta(1), epsilon(1). CF(0) has three main subunits: a, b and c.

The protein resides in the mitochondrion inner membrane. In terms of biological role, mitochondrial membrane ATP synthase (F(1)F(0) ATP synthase or Complex V) produces ATP from ADP in the presence of a proton gradient across the membrane which is generated by electron transport complexes of the respiratory chain. F-type ATPases consist of two structural domains, F(1) - containing the extramembraneous catalytic core and F(0) - containing the membrane proton channel, linked together by a central stalk and a peripheral stalk. During catalysis, ATP synthesis in the catalytic domain of F(1) is coupled via a rotary mechanism of the central stalk subunits to proton translocation. Key component of the proton channel; it may play a direct role in the translocation of protons across the membrane. This is ATP synthase subunit a (ATP6) from Pylaiella littoralis (Seaweed).